Reading from the N-terminus, the 843-residue chain is Protein kintoun (843 aa).

Disordered regions lie at residues 212-242 (PTAE…VHPM), 371-417 (FSRE…PVHS), 545-672 (YTVK…GASQ), and 761-843 (KKNQ…DDVM). A Phosphoserine modification is found at Ser376. A compositionally biased stretch (acidic residues) spans 387-397 (PVEEEEADADL). Positions 564-573 (VKFDHNKESL) are enriched in basic and acidic residues. Residues 584–593 (TEEDEVEEQH) are compositionally biased toward acidic residues. Residues 605 to 619 (QNKKPSKKQRKRNKK) are compositionally biased toward basic residues. A compositionally biased stretch (polar residues) spans 658–671 (YSECNDSSVGSGAS). A compositionally biased stretch (basic residues) spans 761-775 (KKNQKRRDLKLRAQQ). At Ser779 the chain carries Phosphoserine.

The protein belongs to the PIH1 family. Kintoun subfamily. In terms of assembly, interacts with Pp1alpha-96A, Pp1-87B, Pp1-13C and flw.

The protein resides in the cytoplasm. Functionally, required for cytoplasmic pre-assembly of axonemal dyneins, thereby playing a central role in motility in cilia and flagella. Involved in pre-assembly of dynein arm complexes in the cytoplasm before intraflagellar transport loads them for the ciliary compartment. The chain is Protein kintoun from Drosophila ananassae (Fruit fly).